Consider the following 435-residue polypeptide: ATP-dependent protease ATPase subunit HslU (435 aa).

ATP is bound by residues Ile18, 60–65, Asp248, Glu313, and Arg385; that span reads GVGKTE.

Belongs to the ClpX chaperone family. HslU subfamily. In terms of assembly, a double ring-shaped homohexamer of HslV is capped on each side by a ring-shaped HslU homohexamer. The assembly of the HslU/HslV complex is dependent on binding of ATP.

The protein localises to the cytoplasm. ATPase subunit of a proteasome-like degradation complex; this subunit has chaperone activity. The binding of ATP and its subsequent hydrolysis by HslU are essential for unfolding of protein substrates subsequently hydrolyzed by HslV. HslU recognizes the N-terminal part of its protein substrates and unfolds these before they are guided to HslV for hydrolysis. The protein is ATP-dependent protease ATPase subunit HslU of Agrobacterium fabrum (strain C58 / ATCC 33970) (Agrobacterium tumefaciens (strain C58)).